The sequence spans 491 residues: Tryptophan 5-hydroxylase 2 (491 aa).

The residue at position 19 (serine 19) is a Phosphoserine. The segment at 33-63 is disordered; it reads NLTVNKSNSGKNDDKKGNKGSSRSETAPDSG. The 76-residue stretch at 66 to 141 folds into the ACT domain; it reads AVVFSLRNEV…TIVTLNPPEN (76 aa). Histidine 319, histidine 324, and glutamate 364 together coordinate Fe cation.

The protein belongs to the biopterin-dependent aromatic amino acid hydroxylase family. Interacts with DNAJC12. Requires Fe(2+) as cofactor.

The enzyme catalyses (6R)-L-erythro-5,6,7,8-tetrahydrobiopterin + L-tryptophan + O2 = 5-hydroxy-L-tryptophan + (4aS,6R)-4a-hydroxy-L-erythro-5,6,7,8-tetrahydrobiopterin. It functions in the pathway aromatic compound metabolism; serotonin biosynthesis; serotonin from L-tryptophan: step 1/2. In Equus caballus (Horse), this protein is Tryptophan 5-hydroxylase 2 (TPH2).